We begin with the raw amino-acid sequence, 1720 residues long: TOG array regulator of axonemal microtubules protein 1 (1720 aa).

TOG regions lie at residues glutamate 94 to glutamate 312 and proline 352 to serine 596. HEAT repeat units lie at residues alanine 175–glycine 212, valine 214–leucine 247, leucine 251–glutamine 289, asparagine 345–proline 384, serine 390–glutamate 427, glutamine 431–valine 466, glycine 467–glutamate 504, and phenylalanine 506–serine 543. Composition is skewed to polar residues over residues phenylalanine 794 to serine 809, proline 819 to histidine 829, aspartate 842 to proline 852, and leucine 868 to threonine 877. Disordered regions lie at residues phenylalanine 794 to proline 924, histidine 970 to aspartate 998, and lysine 1067 to glutamine 1087. Residues alanine 1073 to glutamine 1087 are compositionally biased toward polar residues. The tract at residues glutamate 1256–glutamine 1425 is TOG 3. HEAT repeat units follow at residues threonine 1294–lysine 1331 and glutamine 1335–proline 1372. The tract at residues glycine 1430–phenylalanine 1462 is disordered. Over residues threonine 1446–serine 1458 the composition is skewed to polar residues. The TOG 4 stretch occupies residues serine 1484 to leucine 1720. 3 HEAT repeats span residues leucine 1485 to aspartate 1522, glycine 1526 to aspartate 1563, and proline 1567 to asparagine 1605.

This sequence belongs to the Crescerin family. In terms of assembly, interacts with ARMC9, CCDC66, CEP104 and CSPP1.

The protein resides in the cell projection. It is found in the cilium. Its subcellular location is the cytoplasm. The protein localises to the cytoskeleton. It localises to the cilium axoneme. Functionally, involved in ciliogenesis. It is required for appropriate acetylation and polyglutamylation of ciliary microtubules, and regulation of cilium length. Interacts with microtubules and promotes microtubule polymerization via its HEAT repeat domains, especially those in TOG region 2 and 4. The protein is TOG array regulator of axonemal microtubules protein 1 of Homo sapiens (Human).